The following is a 124-amino-acid chain: Large ribosomal subunit protein bL12 (124 aa).

Belongs to the bacterial ribosomal protein bL12 family. Homodimer. Part of the ribosomal stalk of the 50S ribosomal subunit. Forms a multimeric L10(L12)X complex, where L10 forms an elongated spine to which 2 to 4 L12 dimers bind in a sequential fashion. Binds GTP-bound translation factors.

In terms of biological role, forms part of the ribosomal stalk which helps the ribosome interact with GTP-bound translation factors. Is thus essential for accurate translation. This chain is Large ribosomal subunit protein bL12, found in Burkholderia cenocepacia (strain HI2424).